A 320-amino-acid polypeptide reads, in one-letter code: dTDP-glucose 4,6-dehydratase (320 aa).

Residues 11–12 (FI), 38–41 (DKLG), 64–65 (DI), 84–88 (FAAET), and Ser-103 contribute to the NAD(+) site. Thr-88 provides a ligand contact to substrate. Thr-128 is a substrate binding site. Asp-129 (proton donor) is an active-site residue. Catalysis depends on proton acceptor residues Glu-130 and Tyr-152. 152 to 156 (YAASK) lines the NAD(+) pocket. Residue Asn-181 participates in substrate binding. Residue Asn-182 coordinates NAD(+). Residues 191-192 (KM), 207-209 (PVY), Arg-216, Asn-251, and 274-278 (DRKGH) contribute to the substrate site.

Belongs to the NAD(P)-dependent epimerase/dehydratase family. dTDP-glucose dehydratase subfamily. In terms of assembly, homodimer. The cofactor is NAD(+).

It catalyses the reaction dTDP-alpha-D-glucose = dTDP-4-dehydro-6-deoxy-alpha-D-glucose + H2O. Probably involved in the biosynthesis of the acarviose moiety of the alpha-glucosidase inhibitor acarbose. Catalyzes the dehydration of dTDP-D-glucose to form dTDP-6-deoxy-D-xylo-4-hexulose via a three-step process involving oxidation, dehydration and reduction. The sequence is that of dTDP-glucose 4,6-dehydratase from Actinoplanes sp. (strain ATCC 31044 / CBS 674.73 / SE50/110).